The following is a 263-amino-acid chain: Aminoglycoside 3'-phosphotransferase (263 aa).

The Proton acceptor role is filled by Asp-183.

The protein belongs to the aminoglycoside phosphotransferase family.

The catalysed reaction is kanamycin A + ATP = kanamycin 3'-phosphate + ADP + H(+). In terms of biological role, resistance to kanamycin and structurally-related aminoglycosides, including amikacin. The sequence is that of Aminoglycoside 3'-phosphotransferase (rph) from Streptomyces ribosidificus.